The chain runs to 302 residues: Recombination-associated protein RdgC (302 aa).

It belongs to the RdgC family.

The protein localises to the cytoplasm. It is found in the nucleoid. Its function is as follows. May be involved in recombination. This chain is Recombination-associated protein RdgC, found in Psychromonas ingrahamii (strain DSM 17664 / CCUG 51855 / 37).